The primary structure comprises 1312 residues: DNA repair protein RAD50.L (1312 aa).

ATP contacts are provided by Arg-13, Asn-38, Gly-39, Gly-41, Lys-42, Thr-43, Thr-44, Val-67, Asp-69, and Gln-159. Thr-43 is a Mg(2+) binding site. Gln-159 contacts Mg(2+). Coiled-coil stretches lie at residues 203 to 342 (VREY…LNRE), 415 to 558 (LREF…IKSR), and 587 to 628 (INQT…FEEK). The region spanning 635–734 (SQDFDSDLSR…RKDDMMELKP (100 aa)) is the Zinc-hook domain. Positions 681 and 684 each coordinate Zn(2+). Residues 712–1070 (LKSAEGELKR…ENKSESLKTN (359 aa)) are a coiled coil.

Belongs to the SMC family. RAD50 subfamily. In terms of assembly, component of the MRN complex composed of two heterodimers RAD50 and MRE11 associated with a single NBN. It depends on Zn(2+) as a cofactor.

It localises to the nucleus. The protein resides in the chromosome. Its subcellular location is the telomere. It catalyses the reaction ATP + H2O = ADP + phosphate + H(+). Functionally, component of the MRN complex, which plays a central role in double-strand break (DSB) repair, DNA recombination, maintenance of telomere integrity and meiosis. The MRN complex is involved in the repair of DNA double-strand breaks (DSBs) via homologous recombination (HR), an error-free mechanism which primarily occurs during S and G2 phases. The complex (1) mediates the end resection of damaged DNA, which generates proper single-stranded DNA, a key initial steps in HR, and is (2) required for the recruitment of other repair factors and efficient activation of ATM and ATR upon DNA damage. The MRN complex possesses single-strand endonuclease activity and double-strand-specific 3'-5' exonuclease activity, which are provided by mre11, to initiate end resection, which is required for single-strand invasion and recombination. Within the complex, rad50 is both required to bind DNA ends and hold them in close proximity and regulate the activity of MRE11. Rad50 provides an ATP-dependent control of MRE11 by positioning DNA ends into the mre11 active site: ATP-binding induces a large structural change from an open form with accessible MRE11 nuclease sites into a closed form. The MRN complex is also required for DNA damage signaling via activation of the atm and atr kinases: the nuclease activity of mre11 is not required to activate ATM and ATR. The MRN complex promotes recruitment of topbp1 to DNA damage sites. The MRN complex and rbbp8/CtIP are also required for chromosome alignment during metaphase. The sequence is that of DNA repair protein RAD50.L from Xenopus laevis (African clawed frog).